We begin with the raw amino-acid sequence, 679 residues long: UvrABC system protein B (679 aa).

A Helicase ATP-binding domain is found at glutamate 25–glycine 190. Glycine 38–threonine 45 is a binding site for ATP. Residues tyrosine 91–isoleucine 114 carry the Beta-hairpin motif. A Helicase C-terminal domain is found at glutamine 429–alanine 591. Residues proline 639–lysine 674 enclose the UVR domain.

This sequence belongs to the UvrB family. As to quaternary structure, forms a heterotetramer with UvrA during the search for lesions. Interacts with UvrC in an incision complex.

The protein localises to the cytoplasm. In terms of biological role, the UvrABC repair system catalyzes the recognition and processing of DNA lesions. A damage recognition complex composed of 2 UvrA and 2 UvrB subunits scans DNA for abnormalities. Upon binding of the UvrA(2)B(2) complex to a putative damaged site, the DNA wraps around one UvrB monomer. DNA wrap is dependent on ATP binding by UvrB and probably causes local melting of the DNA helix, facilitating insertion of UvrB beta-hairpin between the DNA strands. Then UvrB probes one DNA strand for the presence of a lesion. If a lesion is found the UvrA subunits dissociate and the UvrB-DNA preincision complex is formed. This complex is subsequently bound by UvrC and the second UvrB is released. If no lesion is found, the DNA wraps around the other UvrB subunit that will check the other stand for damage. This chain is UvrABC system protein B, found in Prochlorococcus marinus (strain MIT 9303).